The primary structure comprises 570 residues: Dwarfin sma-4 (570 aa).

The disordered stretch occupies residues 115–134 (SSQASSQPPPTPTVNPTPIP). Over residues 121–134 (QPPPTPTVNPTPIP) the composition is skewed to pro residues. In terms of domain architecture, MH1 spans 150–273 (QISHVLQCYQ…YERVVSNRIT (124 aa)). The Zn(2+) site is built by Cys203, Cys247, Cys258, and His263. An MH2 domain is found at 350–570 (WCSIIYYELD…LKNSSQFGSS (221 aa)).

This sequence belongs to the dwarfin/SMAD family.

Its subcellular location is the cytoplasm. It localises to the nucleus. Involved in TGF-beta pathway. This Caenorhabditis elegans protein is Dwarfin sma-4 (sma-4).